A 293-amino-acid chain; its full sequence is 1D-myo-inositol 2-acetamido-2-deoxy-alpha-D-glucopyranoside deacetylase (293 aa).

Residues His-16, Asp-19, and His-156 each coordinate Zn(2+).

Belongs to the MshB deacetylase family. The cofactor is Zn(2+).

The catalysed reaction is 1D-myo-inositol 2-acetamido-2-deoxy-alpha-D-glucopyranoside + H2O = 1D-myo-inositol 2-amino-2-deoxy-alpha-D-glucopyranoside + acetate. Its function is as follows. Catalyzes the deacetylation of 1D-myo-inositol 2-acetamido-2-deoxy-alpha-D-glucopyranoside (GlcNAc-Ins) in the mycothiol biosynthesis pathway. In Nakamurella multipartita (strain ATCC 700099 / DSM 44233 / CIP 104796 / JCM 9543 / NBRC 105858 / Y-104) (Microsphaera multipartita), this protein is 1D-myo-inositol 2-acetamido-2-deoxy-alpha-D-glucopyranoside deacetylase.